The following is a 100-amino-acid chain: Urease subunit gamma (100 aa).

It belongs to the urease gamma subunit family. As to quaternary structure, heterotrimer of UreA (gamma), UreB (beta) and UreC (alpha) subunits. Three heterotrimers associate to form the active enzyme.

It is found in the cytoplasm. The catalysed reaction is urea + 2 H2O + H(+) = hydrogencarbonate + 2 NH4(+). The protein operates within nitrogen metabolism; urea degradation; CO(2) and NH(3) from urea (urease route): step 1/1. This is Urease subunit gamma from Paraburkholderia phytofirmans (strain DSM 17436 / LMG 22146 / PsJN) (Burkholderia phytofirmans).